Consider the following 412-residue polypeptide: Protein png-1 (412 aa).

C150, C153, C182, and C185 together coordinate Zn(2+). The disordered stretch occupies residues 363-412 (AAAARGGRSSPDNKSGANMMGSPATGDIKRPIPEDAPVPDVPSLWPTYGP).

Belongs to the transglutaminase-like superfamily. PNGase family.

This Neurospora crassa (strain ATCC 24698 / 74-OR23-1A / CBS 708.71 / DSM 1257 / FGSC 987) protein is Protein png-1 (un-7).